Consider the following 1251-residue polypeptide: Botulinum neurotoxin type E (1251 aa).

Residue H212 coordinates Zn(2+). Residue E213 is part of the active site. H216 and E251 together coordinate Zn(2+). The cysteines at positions 412 and 426 are disulfide-linked. The tract at residues K423–L819 is translocation domain (TD). Residues N466–N515 form a belt region. The interval K845–P1067 is N-terminus of receptor binding domain (N-RBD). Positions N1068–K1251 are C-terminus of receptor binding domain (C-RBD). The short motif at S1221–Y1224 is the Host ganglioside-binding motif element.

The protein belongs to the peptidase M27 family. As to quaternary structure, heterodimer; disulfide-linked heterodimer of a light chain (LC) and a heavy chain (HC). The LC has the proteolytic/pharmacological activity, while the N- and C-terminal of the HC mediate channel formation and toxin binding, respectively. Interacts with host synaptic vesicle glycoproteins SV2A and SV2B which probably serve as coreceptors. Zn(2+) is required as a cofactor.

The protein resides in the secreted. It localises to the host cytoplasm. Its subcellular location is the host cytosol. The protein localises to the host synapse. It is found in the host presynaptic cell membrane. The protein resides in the host cytoplasmic vesicle. It localises to the host secretory vesicle. Its subcellular location is the host synaptic vesicle membrane. It carries out the reaction Limited hydrolysis of proteins of the neuroexocytosis apparatus, synaptobrevins, SNAP25 or syntaxin. No detected action on small molecule substrates.. Its function is as follows. Botulinum toxin causes flaccid paralysis by inhibiting neurotransmitter (acetylcholine) release from the presynaptic membranes of nerve terminals of eukaryotic host skeletal and autonomic nervous system, with frequent heart or respiratory failure. Precursor of botulinum neurotoxin E which has 2 coreceptors; complex polysialylated gangliosides found on neural tissue and specific membrane-anchored proteins found in synaptic vesicles. Receptor proteins are exposed on host presynaptic cell membrane during neurotransmitter release, when the toxin heavy chain (HC) binds to them. Upon synaptic vesicle recycling the toxin is taken up via the endocytic pathway. When the pH of the toxin-containing endosome drops a structural rearrangement occurs so that the N-terminus of the HC forms pores that allows the light chain (LC) to translocate into the cytosol. Once in the cytosol the disulfide bond linking the 2 subunits is reduced and LC cleaves its target protein on synaptic vesicles, preventing their fusion with the cytoplasmic membrane and thus neurotransmitter release. Has proteolytic activity. After translocation into the eukaryotic host cytosol, LC hydrolyzes the '180-Arg-|-Ile-181' bond in SNAP25, blocking neurotransmitter release. In terms of biological role, responsible for host epithelial cell transcytosis, host nerve cell targeting and translocation of light chain (LC) into host cytosol. Composed of 3 subdomains; the translocation domain (TD), and N-terminus and C-terminus of the receptor-binding domain (RBD). The RBD is responsible for the adherence of the toxin to the cell surface. It simultaneously recognizes 2 coreceptors; host polysialated gangliosides and the receptor proteins SV2A and SV2B in close proximity on host synaptic vesicles. Interaction with SV2 proteins requires SV2 glycosylation. The N-terminus of the TD wraps an extended belt around the perimeter of the LC, protecting Zn(2+) in the active site; it may also prevent premature LC dissociation from the translocation channel and protect toxin prior to translocation. The TD inserts into synaptic vesicle membrane to allow translocation into the host cytosol. Binds ganglioside GD1a in vitro. This chain is Botulinum neurotoxin type E, found in Clostridium butyricum.